Reading from the N-terminus, the 148-residue chain is Snaclec B2 (148 aa).

A signal peptide spans 1–24 (MGRLISVSFGLLVVFLSLSGTGAA). Intrachain disulfides connect C27/C38, C55/C144, and C121/C136. Residues 34–145 (YDQHCYKVFD…CRLLGHFVCK (112 aa)) form the C-type lectin domain.

It belongs to the snaclec family. Heterodimer; disulfide-linked. As to expression, expressed by the venom gland.

Its subcellular location is the secreted. In terms of biological role, interferes with one step of hemostasis (modulation of platelet aggregation, or coagulation cascade, for example). The sequence is that of Snaclec B2 from Macrovipera lebetinus (Levantine viper).